The chain runs to 476 residues: MDLVIGGKFKLGKKIGSGSFGELYLGVNVQTGEEVAVKLENVKTKHPQLHYESKLYMLLQGGSGIPNIKWFGVEGDYSVMVIDLLGPSLEDLFNYCNRKLTLKTVLMLADQLLNRVEFMHTRGFLHRDIKPDNFLMGLGRKANQVYIIDFGLGKKYRDLQTHKHIPYRENKNLTGTARYASVNTHLGVEQSRRDDLESLGYVLMYFLKGSLPWQGLKAGTKKQKYDRISEKKVSTPIEVLCKNQPSEFVSYFHYCRSLRFDDKPDYSYLKRLFRDLFIREGYQFDYVFDWTVLKYPQIGSSSGSSSRTRHHTTAKPGFNADPIERQERILGKETTRYKIPGAVEAFSRRHPTTTSSPRDRSRSRNSDDGPFSKQTHGDSERANSSSRYRASSSRKAVAASSSRPSSAGGPSESRTSSRLVSSSGGGGSGSGNGRPSTSQRVQAGYESKTLSFSRATAARNTREDQLRSFELLSLRK.

The 270-residue stretch at 9-278 folds into the Protein kinase domain; sequence FKLGKKIGSG…LKRLFRDLFI (270 aa). Residues 15–23 and K38 contribute to the ATP site; that span reads IGSGSFGEL. The Proton acceptor role is filled by D128. Disordered stretches follow at residues 299–324 and 340–464; these read GSSS…DPIE and PGAV…TRED. The span at 357–367 shows a compositional bias: basic and acidic residues; the sequence is PRDRSRSRNSD. The segment covering 382 to 422 has biased composition (low complexity); that stretch reads ANSSSRYRASSSRKAVAASSSRPSSAGGPSESRTSSRLVSS. Positions 423–432 are enriched in gly residues; sequence SGGGGSGSGN.

It belongs to the protein kinase superfamily. CK1 Ser/Thr protein kinase family. Casein kinase I subfamily. In terms of assembly, monomer. Post-translationally, autophosphorylated.

The protein localises to the cytoplasm. The enzyme catalyses L-seryl-[protein] + ATP = O-phospho-L-seryl-[protein] + ADP + H(+). It catalyses the reaction L-threonyl-[protein] + ATP = O-phospho-L-threonyl-[protein] + ADP + H(+). Casein kinases are operationally defined by their preferential utilization of acidic proteins such as caseins as substrates. It can phosphorylate a large number of proteins. This is Casein kinase 1-like protein 7 from Arabidopsis thaliana (Mouse-ear cress).